Here is a 307-residue protein sequence, read N- to C-terminus: Major pollen allergen Lol p 5a (307 aa).

The signal sequence occupies residues 1–25; sequence MAVQKYTVALFLAVALVAGPAASYA.

It belongs to the Poa p IX/Phl p VI allergen family. Pollen, starch granules.

In Lolium perenne (Perennial ryegrass), this protein is Major pollen allergen Lol p 5a (LOLPIB).